Consider the following 161-residue polypeptide: 2-C-methyl-D-erythritol 2,4-cyclodiphosphate synthase (161 aa).

The a divalent metal cation site is built by D9 and H11. Residues 9–11 and 37–38 each bind 4-CDP-2-C-methyl-D-erythritol 2-phosphate; these read DFH and HS. An a divalent metal cation-binding site is contributed by H45. 4-CDP-2-C-methyl-D-erythritol 2-phosphate is bound by residues 59-61, 64-68, 135-138, and R145; these read DIG, FPDTD, and TTTE.

Belongs to the IspF family. In terms of assembly, homotrimer. A divalent metal cation serves as cofactor.

It catalyses the reaction 4-CDP-2-C-methyl-D-erythritol 2-phosphate = 2-C-methyl-D-erythritol 2,4-cyclic diphosphate + CMP. It participates in isoprenoid biosynthesis; isopentenyl diphosphate biosynthesis via DXP pathway; isopentenyl diphosphate from 1-deoxy-D-xylulose 5-phosphate: step 4/6. Involved in the biosynthesis of isopentenyl diphosphate (IPP) and dimethylallyl diphosphate (DMAPP), two major building blocks of isoprenoid compounds. Catalyzes the conversion of 4-diphosphocytidyl-2-C-methyl-D-erythritol 2-phosphate (CDP-ME2P) to 2-C-methyl-D-erythritol 2,4-cyclodiphosphate (ME-CPP) with a corresponding release of cytidine 5-monophosphate (CMP). The sequence is that of 2-C-methyl-D-erythritol 2,4-cyclodiphosphate synthase from Leptospira borgpetersenii serovar Hardjo-bovis (strain JB197).